Here is a 347-residue protein sequence, read N- to C-terminus: Transcription factor JunD (347 aa).

Positions 1 to 43 are disordered; it reads METPFYGDEALSGLGGGASGSGGSFASPGRLFPGAPPTAAAGS. The span at 13 to 23 shows a compositional bias: gly residues; the sequence is GLGGGASGSGG. The short motif at 27-39 is the Menin-binding motif (MBM) element; sequence SPGRLFPGAPPTA. An MAP kinase docking motif; essential for its phosphorylation motif is present at residues 46-55; it reads KKDALTLSLS. The interval 62-86 is disordered; it reads LKPAAAPPPTPLRADGAPSAAPPDG. Residues 73 to 86 show a composition bias toward low complexity; it reads LRADGAPSAAPPDG. Position 90 is a phosphoserine (Ser-90). At Ser-100 the chain carries Phosphoserine; by MAPK8. Phosphothreonine is present on Thr-117. The interval 244–264 is disordered; it reads QTVPDVPSFGESPPLSPIDMD. Ser-251, Ser-255, and Ser-259 each carry phosphoserine. The interval 268 to 295 is basic motif; it reads RIKAERKRLRNRIAASKCRKRKLERISR. Residues 268 to 331 enclose the bZIP domain; it reads RIKAERKRLR…AQLKQKVLSH (64 aa). Residues 296-324 form a leucine-zipper region; that stretch reads LEEKVKTLKSQNTELASTASLLREQVAQL.

Belongs to the bZIP family. Jun subfamily. In terms of assembly, heterodimer; binds DNA as a heterodimer. Component of an AP-1 transcription factor complex composed of JUN-FOS heterodimers. As part of the AP-1 transcription factor complex, forms heterodimers with FOS proteins, thereby binding to the AP-1 consensus sequence and stimulating transcription. Forms heterodimers with FOSB; thereby binding to the AP-1 consensus sequence. Interacts (via MBM motif) with MEN1; this interaction represses transcriptional activation. Interacts with MAPK10; this interaction is inhibited in the presence of MEN1. In terms of processing, phosphorylated by MAP kinases MAPK8 and MAPK10; phosphorylation is inhibited in the presence of MEN1.

The protein resides in the nucleus. In terms of biological role, transcription factor binding AP-1 sites. Heterodimerizes with proteins of the FOS family to form an AP-1 transcription factor complex, thereby enhancing their DNA binding activity to an AP-1 consensus sequence 3'-TGA[GC]TCA-5' and enhancing their transcriptional activity. This is Transcription factor JunD (JUND) from Homo sapiens (Human).